The sequence spans 309 residues: Ornithine carbamoyltransferase (309 aa).

Residues 56 to 59, Gln83, Arg107, and 134 to 137 each bind carbamoyl phosphate; these read STRT and HPCQ. Residues Asn165, Asp223, and 227-228 each bind L-ornithine; that span reads SM. Carbamoyl phosphate contacts are provided by residues 263–264 and Arg291; that span reads CL.

The protein belongs to the aspartate/ornithine carbamoyltransferase superfamily. OTCase family.

Its subcellular location is the cytoplasm. It carries out the reaction carbamoyl phosphate + L-ornithine = L-citrulline + phosphate + H(+). It participates in amino-acid biosynthesis; L-arginine biosynthesis; L-arginine from L-ornithine and carbamoyl phosphate: step 1/3. Its function is as follows. Reversibly catalyzes the transfer of the carbamoyl group from carbamoyl phosphate (CP) to the N(epsilon) atom of ornithine (ORN) to produce L-citrulline. The chain is Ornithine carbamoyltransferase from Burkholderia lata (strain ATCC 17760 / DSM 23089 / LMG 22485 / NCIMB 9086 / R18194 / 383).